The primary structure comprises 376 residues: Tetraacyldisaccharide 4'-kinase (376 aa).

Position 51–58 (51–58 (AVGGTGKT)) interacts with ATP.

Belongs to the LpxK family.

It carries out the reaction a lipid A disaccharide + ATP = a lipid IVA + ADP + H(+). Its pathway is glycolipid biosynthesis; lipid IV(A) biosynthesis; lipid IV(A) from (3R)-3-hydroxytetradecanoyl-[acyl-carrier-protein] and UDP-N-acetyl-alpha-D-glucosamine: step 6/6. Transfers the gamma-phosphate of ATP to the 4'-position of a tetraacyldisaccharide 1-phosphate intermediate (termed DS-1-P) to form tetraacyldisaccharide 1,4'-bis-phosphate (lipid IVA). The sequence is that of Tetraacyldisaccharide 4'-kinase from Bacteroides fragilis (strain ATCC 25285 / DSM 2151 / CCUG 4856 / JCM 11019 / LMG 10263 / NCTC 9343 / Onslow / VPI 2553 / EN-2).